Consider the following 197-residue polypeptide: Phosphoheptose isomerase (197 aa).

The SIS domain maps to 36 to 197 (LFAALANNGR…IDALLLGDTE (162 aa)). Substrate is bound at residue 51–53 (NGG). Zn(2+) contacts are provided by His-60 and Glu-64. Residues Glu-64, 93–94 (ND), 119–121 (STS), Ser-124, and Gln-174 contribute to the substrate site. 2 residues coordinate Zn(2+): Gln-174 and His-182.

Belongs to the SIS family. GmhA subfamily. Homotetramer. Zn(2+) is required as a cofactor.

It is found in the cytoplasm. The catalysed reaction is 2 D-sedoheptulose 7-phosphate = D-glycero-alpha-D-manno-heptose 7-phosphate + D-glycero-beta-D-manno-heptose 7-phosphate. Its pathway is carbohydrate biosynthesis; D-glycero-D-manno-heptose 7-phosphate biosynthesis; D-glycero-alpha-D-manno-heptose 7-phosphate and D-glycero-beta-D-manno-heptose 7-phosphate from sedoheptulose 7-phosphate: step 1/1. Its function is as follows. Catalyzes the isomerization of sedoheptulose 7-phosphate in D-glycero-D-manno-heptose 7-phosphate. This chain is Phosphoheptose isomerase, found in Bordetella avium (strain 197N).